Reading from the N-terminus, the 418-residue chain is UDP-N-acetylglucosamine 1-carboxyvinyltransferase (418 aa).

Residue 23 to 24 (KN) participates in phosphoenolpyruvate binding. Residue Arg-93 participates in UDP-N-acetyl-alpha-D-glucosamine binding. Asp-117 acts as the Proton donor in catalysis. Asp-305 and Val-327 together coordinate UDP-N-acetyl-alpha-D-glucosamine.

It belongs to the EPSP synthase family. MurA subfamily.

The protein resides in the cytoplasm. It carries out the reaction phosphoenolpyruvate + UDP-N-acetyl-alpha-D-glucosamine = UDP-N-acetyl-3-O-(1-carboxyvinyl)-alpha-D-glucosamine + phosphate. The protein operates within cell wall biogenesis; peptidoglycan biosynthesis. Cell wall formation. Adds enolpyruvyl to UDP-N-acetylglucosamine. The chain is UDP-N-acetylglucosamine 1-carboxyvinyltransferase from Mycobacterium leprae (strain TN).